The sequence spans 455 residues: T-box protein VegT-B (455 aa).

Positions 57 to 230 (LWTQFHQEGT…HNPFAKGFRE (174 aa)) form a DNA-binding region, T-box. Positions 229 to 241 (REQERSHKRDDVL) are enriched in basic and acidic residues. Disordered stretches follow at residues 229–276 (REQE…RIKE) and 295–350 (ANQG…RRLT). A compositionally biased stretch (polar residues) spans 308–326 (GVNQEQQVPTSSSNFYIKS).

In terms of assembly, forms a repression complex on the promoters of the nodal/nr1 and siamois genes with the maternal factors tcf7l1/tcf3 and pouf5.1/oct-25. Interacts (via C-terminus) with tcf7l1/tcf3 (via N-terminus). Also interacts with the other POU-domain transcription factors pou5f1.2/oct-91 and pou5f1.3/oct-60. In terms of tissue distribution, maternally localized to the vegetal hemisphere of oocytes. Zygotic expression parallels blastopore formation and shifts from dorsal expression in the marginal zone of late blastula and early gastrula stages to a ventral/lateral expression at later stages. During neurula and tailbud stages, expressed in the posterior and anterior ends of the embryo. During tailbud stages, expressed in a subset of interneurons in the neural tube.

The protein localises to the nucleus. Its function is as follows. Transcription factor required for both mesoderm and endoderm formation in the embryo; signaling determinants and concentration levels may determine which germ layer is formed. Acts together with beta-catenin to activate genes that are responsible for mesoderm induction including wnt-8, eomes t/bra, siamois, mix1 and sox17. Directly binds to promoter DNA. Patterns the mesoderm along the dorsoventral and posterior axis. Activates siamois gene transcription when alone or in combination with beta-catenin, but inhibits siamois transcription in combination with pou5f1.1/oct-25. This chain is T-box protein VegT-B (vegt-b), found in Xenopus laevis (African clawed frog).